We begin with the raw amino-acid sequence, 211 residues long: Endo-1,4-beta-xylanase 3 (211 aa).

An N-terminal signal peptide occupies residues methionine 1–arginine 27. Residues serine 28–serine 210 enclose the GH11 domain. The active-site Nucleophile is the glutamate 106. A disulfide bridge links cysteine 119 with cysteine 138. The active-site Proton donor is the glutamate 197.

This sequence belongs to the glycosyl hydrolase 11 (cellulase G) family.

It localises to the secreted. The catalysed reaction is Endohydrolysis of (1-&gt;4)-beta-D-xylosidic linkages in xylans.. It participates in glycan degradation; xylan degradation. In Aspergillus kawachii (strain NBRC 4308) (White koji mold), this protein is Endo-1,4-beta-xylanase 3 (xynC).